A 1005-amino-acid chain; its full sequence is Non-structural polyprotein 1A (1005 aa).

4 helical membrane-spanning segments follow: residues 239-259 (PDGA…MDYM), 286-306 (DEIV…SLAY), 313-333 (VLIL…ALVA), and 344-364 (TLVL…YGLG). Residues histidine 524, aspartate 556, and serine 621 each act as charge relay system; for serine protease activity in the active site. An O-(5'-phospho-RNA)-tyrosine modification is found at tyrosine 753. A disordered region spans residues 940 to 984 (PVIQQVEQQPQVEQQQQPQQPVVEEKKRTPPPKPQRKPKTGAKAK). Residues 941–961 (VIQQVEQQPQVEQQQQPQQPV) show a composition bias toward low complexity.

It belongs to the astroviridae polyprotein 1A family. As to quaternary structure, monomer. In terms of processing, cleaved by the viral and host proteases. The protease is probably autocatalytically cleaved.

It localises to the host membrane. It catalyses the reaction RNA(n) + a ribonucleoside 5'-triphosphate = RNA(n+1) + diphosphate. Functionally, responsible for the cleavage of the polyprotein into functional products. Protein covalently attached to the 5' extremity of the genomic and subgenomic RNAs. It may serve as a primer for the replicase. The sequence is that of Non-structural polyprotein 1A (ORF1) from Avian nephritis virus 1 (ANV-1).